The chain runs to 255 residues: Imidazole glycerol phosphate synthase subunit HisF (255 aa).

Catalysis depends on residues aspartate 11 and aspartate 130.

This sequence belongs to the HisA/HisF family. In terms of assembly, heterodimer of HisH and HisF.

The protein localises to the cytoplasm. It catalyses the reaction 5-[(5-phospho-1-deoxy-D-ribulos-1-ylimino)methylamino]-1-(5-phospho-beta-D-ribosyl)imidazole-4-carboxamide + L-glutamine = D-erythro-1-(imidazol-4-yl)glycerol 3-phosphate + 5-amino-1-(5-phospho-beta-D-ribosyl)imidazole-4-carboxamide + L-glutamate + H(+). It participates in amino-acid biosynthesis; L-histidine biosynthesis; L-histidine from 5-phospho-alpha-D-ribose 1-diphosphate: step 5/9. Its function is as follows. IGPS catalyzes the conversion of PRFAR and glutamine to IGP, AICAR and glutamate. The HisF subunit catalyzes the cyclization activity that produces IGP and AICAR from PRFAR using the ammonia provided by the HisH subunit. This is Imidazole glycerol phosphate synthase subunit HisF from Rhodopseudomonas palustris (strain BisB5).